The chain runs to 585 residues: Formate--tetrahydrofolate ligase (585 aa).

Residue 74–81 coordinates ATP; the sequence is TPLGEGKT.

Belongs to the formate--tetrahydrofolate ligase family.

It carries out the reaction (6S)-5,6,7,8-tetrahydrofolate + formate + ATP = (6R)-10-formyltetrahydrofolate + ADP + phosphate. Its pathway is one-carbon metabolism; tetrahydrofolate interconversion. This is Formate--tetrahydrofolate ligase from Yersinia enterocolitica serotype O:8 / biotype 1B (strain NCTC 13174 / 8081).